A 197-amino-acid polypeptide reads, in one-letter code: Molybdenum cofactor guanylyltransferase (197 aa).

Residues 12-14 (LAG), Lys25, Asn53, Asp71, and Asp101 contribute to the GTP site. Asp101 serves as a coordination point for Mg(2+).

The protein belongs to the MobA family. In terms of assembly, monomer. It depends on Mg(2+) as a cofactor.

It localises to the cytoplasm. The catalysed reaction is Mo-molybdopterin + GTP + H(+) = Mo-molybdopterin guanine dinucleotide + diphosphate. Its function is as follows. Transfers a GMP moiety from GTP to Mo-molybdopterin (Mo-MPT) cofactor (Moco or molybdenum cofactor) to form Mo-molybdopterin guanine dinucleotide (Mo-MGD) cofactor. The chain is Molybdenum cofactor guanylyltransferase from Bordetella pertussis (strain Tohama I / ATCC BAA-589 / NCTC 13251).